We begin with the raw amino-acid sequence, 182 residues long: Small heat shock protein hspG1 (182 aa).

Residues 43-182 (IKRIDIIPSM…SNSSFKININ (140 aa)) enclose the sHSP domain.

This sequence belongs to the small heat shock protein (HSP20) family.

The sequence is that of Small heat shock protein hspG1 (hspG1) from Dictyostelium discoideum (Social amoeba).